Here is a 930-residue protein sequence, read N- to C-terminus: Protein ARABIDILLO 1 (930 aa).

A Nuclear localization signal motif is present at residues 3–8 (RRVRRK). Residues 44–90 (FVDWISLPYDTVLQLFTCLNYRDRASLASTCKTWRCLGASSCLWTSL) enclose the F-box domain. ARM repeat units follow at residues 172–212 (RITS…KHCP), 244–285 (TSNI…TSSQ), 379–418 (PEGL…TFVV), 428–467 (CGRA…NLSV), 469–508 (ANIA…NLSV), 510–552 (EEHK…NLAA), 554–594 (DKCS…NLAA), 600–639 (NNNA…NLSF), 641–683 (DKNR…GLSV), 685–724 (EANS…NLAF), 726–766 (PGNA…YMFD), 790–831 (LDGA…QVTE), and 835–875 (IQEA…QFTI).

Belongs to the beta-catenin family. Interacts with SNL1. Interacts with MYB53, MYB92 and MYB93. Expressed ubiquitously, with higher levels in root tip, pericycle and vasculature.

Its subcellular location is the nucleus. Its function is as follows. Promotes lateral root initiation and development, independently of auxin (IAA) and abscisis acid (ABA). The polypeptide is Protein ARABIDILLO 1 (FBX5) (Arabidopsis thaliana (Mouse-ear cress)).